A 180-amino-acid chain; its full sequence is Large ribosomal subunit protein uL6 (180 aa).

It belongs to the universal ribosomal protein uL6 family. Part of the 50S ribosomal subunit.

This protein binds to the 23S rRNA, and is important in its secondary structure. It is located near the subunit interface in the base of the L7/L12 stalk, and near the tRNA binding site of the peptidyltransferase center. This chain is Large ribosomal subunit protein uL6, found in Borreliella afzelii (strain PKo) (Borrelia afzelii).